A 302-amino-acid polypeptide reads, in one-letter code: Pyridoxal 5'-phosphate synthase subunit PdxS (302 aa).

Asp-32 provides a ligand contact to D-ribose 5-phosphate. The active-site Schiff-base intermediate with D-ribose 5-phosphate is the Lys-89. Gly-161 contacts D-ribose 5-phosphate. Residue Arg-173 coordinates D-glyceraldehyde 3-phosphate. D-ribose 5-phosphate contacts are provided by residues Gly-222 and Gly-243–Ser-244. The segment at Ala-276–Val-302 is disordered. Residues Glu-293–Val-302 are compositionally biased toward basic and acidic residues.

It belongs to the PdxS/SNZ family. In the presence of PdxT, forms a dodecamer of heterodimers.

It catalyses the reaction aldehydo-D-ribose 5-phosphate + D-glyceraldehyde 3-phosphate + L-glutamine = pyridoxal 5'-phosphate + L-glutamate + phosphate + 3 H2O + H(+). It participates in cofactor biosynthesis; pyridoxal 5'-phosphate biosynthesis. Catalyzes the formation of pyridoxal 5'-phosphate from ribose 5-phosphate (RBP), glyceraldehyde 3-phosphate (G3P) and ammonia. The ammonia is provided by the PdxT subunit. Can also use ribulose 5-phosphate and dihydroxyacetone phosphate as substrates, resulting from enzyme-catalyzed isomerization of RBP and G3P, respectively. The sequence is that of Pyridoxal 5'-phosphate synthase subunit PdxS from Haloquadratum walsbyi (strain DSM 16790 / HBSQ001).